The sequence spans 861 residues: Leucine--tRNA ligase (861 aa).

A 'HIGH' region motif is present at residues 42 to 52 (PYPSGKLHMGH). The 'KMSKS' region motif lies at 620–624 (KMSKS). K623 is a binding site for ATP.

This sequence belongs to the class-I aminoacyl-tRNA synthetase family.

The protein localises to the cytoplasm. The catalysed reaction is tRNA(Leu) + L-leucine + ATP = L-leucyl-tRNA(Leu) + AMP + diphosphate. The polypeptide is Leucine--tRNA ligase (Marinobacter nauticus (strain ATCC 700491 / DSM 11845 / VT8) (Marinobacter aquaeolei)).